A 1947-amino-acid polypeptide reads, in one-letter code: Sodium channel protein type 3 subunit alpha (1947 aa).

The Cytoplasmic segment spans residues 1 to 128 (MAQALLVPPG…KIAIKILVHS (128 aa)). The interval 28-60 (RAAEEKAKKPKKEQDIDDENKPKPNSDLEAGKN) is disordered. Residues 46–57 (ENKPKPNSDLEA) are compositionally biased toward basic and acidic residues. An I repeat occupies 110-455 (ILTPLNPVRK…QQMLEQLKKQ (346 aa)). Residues 129–146 (LFSMLIMCTILTNCVFMT) traverse the membrane as a helical segment. Topologically, residues 147 to 152 (LSNPPD) are extracellular. Residues 153–174 (WTKNVEYTFTGIYTFESLIKIL) traverse the membrane as a helical segment. Residues 175 to 188 (ARGFCLEDFTFLRD) lie on the Cytoplasmic side of the membrane. The helical transmembrane segment at 189–206 (PWNWLDFSVIVMAYVTEF) threads the bilayer. Residues 207 to 213 (VDLGNVS) lie on the Extracellular side of the membrane. Asparagine 211 is a glycosylation site (N-linked (GlcNAc...) asparagine). Residues 214-235 (ALRTFRVLRALKTISVIPGLKT) traverse the membrane as a helical segment. Residues 236–249 (IVGALIQSVKKLSD) lie on the Cytoplasmic side of the membrane. A helical transmembrane segment spans residues 250 to 269 (VMILTVFCLSVFALIGLQLF). Residues 270–369 (MGNLRNKCLQ…NYGYTSFDTF (100 aa)) lie on the Extracellular side of the membrane. N-linked (GlcNAc...) asparagine glycans are attached at residues asparagine 290, asparagine 296, asparagine 302, asparagine 307, and asparagine 339. The segment at residues 370–386 (SWAFLSLFRLMTQDYWE) is an intramembrane region (pore-forming). Residues 387 to 397 (NLYQLTLRAAG) are Extracellular-facing. The chain crosses the membrane as a helical span at residues 398–424 (KTYMIFFVLVIFLGSFYLVNLILAVVA). Over 425–712 (MAYEEQNQAT…LVNLIVMDPF (288 aa)) the chain is Cytoplasmic. Residues serine 484, serine 485, and serine 486 each carry the phosphoserine modification. Disordered regions lie at residues 493–529 (SKSA…SESE) and 587–632 (VGSE…ETEV). Positions 500–509 (RNRRKKRRQR) are enriched in basic residues. 2 stretches are compositionally biased toward basic and acidic residues: residues 510–529 (EHLE…SESE) and 596–622 (DEHS…ERRN). An II repeat occupies 693–965 (CCDSWLKVKH…QIAVGRMQKG (273 aa)). The helical transmembrane segment at 713 to 730 (VDLAITICIVLNTLFMAM) threads the bilayer. At 731–738 (EHYPMTEQ) the chain is on the extracellular side. The chain crosses the membrane as a helical span at residues 739-763 (FSSVLTVGNLVFTGIFTAEMVLKII). Topologically, residues 764–773 (AMDPYYYFQE) are cytoplasmic. The chain crosses the membrane as a helical span at residues 774–793 (GWNIFDGIIVSLSLMELGLA). At 794 to 797 (NVEG) the chain is on the extracellular side. Residues 798-816 (LSVLRSFRLLRVFKLAKSW) traverse the membrane as a helical segment. Over 817-834 (PTLNMLIKIIGNSVGALG) the chain is Cytoplasmic. A helical transmembrane segment spans residues 835 to 855 (NLTLVLAIIVFIFAVVGMQLF). Over 856-880 (GKSYKECVCKINEDCKLPRWHMNDF) the chain is Extracellular. The cysteines at positions 864 and 870 are disulfide-linked. Positions 881 to 896 (FHSFLIVFRVLCGEWI) form an intramembrane region, pore-forming. The Extracellular segment spans residues 897–907 (ETMWDCMEVAG). A disulfide bond links cysteine 902 and cysteine 911. A helical membrane pass occupies residues 908–934 (QTMCLIVFMLVMVIGNLVVLNLFLALL). Residues 935–1157 (LSSFSSDNLA…RKTCYSIVEH (223 aa)) are Cytoplasmic-facing. Positions 1070–1113 (EEFSSESELEESKEKLNATSSSEGSTVDVAPPREGEQAEIEPEE) are disordered. An III repeat occupies 1140–1451 (KGKIWWNLRK…KKYYNAMKKL (312 aa)). Residues 1158–1178 (NWFETFIVFMILLSSGALAFE) traverse the membrane as a helical segment. Residues 1179 to 1190 (DIYIEQRKTIKT) are Extracellular-facing. The helical transmembrane segment at 1191 to 1212 (MLEYADKVFTYIFILEMLLKWV) threads the bilayer. At 1213–1218 (AYGFQT) the chain is on the cytoplasmic side. Residues 1219–1244 (YFTNAWCWLDFLIVDVSLVSLVANAL) traverse the membrane as a helical segment. Residues 1245–1253 (GYSELGAIK) are Extracellular-facing. Residues 1254–1272 (SLRTLRALRPLRALSRFEG) form a helical membrane-spanning segment. Topologically, residues 1273 to 1285 (MRVVVNALVGAIP) are cytoplasmic. A helical transmembrane segment spans residues 1286–1308 (SIMNVLLVCLIFWLIFSIMGVNL). At 1309–1354 (FAGKFYHCVNMTTGSMFDMSEVNNFSDCQALGKQARWKNVKVNFDN) the chain is on the extracellular side. A disulfide bridge links cysteine 1316 with cysteine 1336. 2 N-linked (GlcNAc...) asparagine glycosylation sites follow: asparagine 1318 and asparagine 1332. Positions 1355–1371 (VGAGYLALLQVATFKGW) form an intramembrane region, pore-forming. At 1372-1394 (MDIMYAAVDSRDVKLQPVYEENL) the chain is on the extracellular side. A helical membrane pass occupies residues 1395 to 1420 (YMYLYFVIFIIFGSFFTLNLFIGVII). At 1421-1478 (DNFNQQKKKFGGQDIFMTEEQKKYYNAMKKLGSKKPQKPIPRPANKFQGMVFDFVTRQ) the chain is on the cytoplasmic side. Serine 1453 bears the Phosphoserine mark. The IV repeat unit spans residues 1460–1758 (IPRPANKFQG…WEKFDPDATQ (299 aa)). Residues 1479-1497 (VFDISIMILICLNMVTMMV) traverse the membrane as a helical segment. Topologically, residues 1498-1505 (ETDDQSKY) are extracellular. The helical transmembrane segment at 1506 to 1529 (MTLVLSRINLVFIVLFTGEFLLKL) threads the bilayer. Residues 1530-1539 (ISLRYYYFTI) lie on the Cytoplasmic side of the membrane. Residues 1540-1557 (GWNIFDFVVVILSIVGMF) form a helical membrane-spanning segment. Topologically, residues 1558-1569 (LAELIEKYFVSP) are extracellular. Residues 1570–1592 (TLFRVIRLARIGRILRLIKGAKG) traverse the membrane as a helical segment. At 1593 to 1605 (IRTLLFALMMSLP) the chain is on the cytoplasmic side. A helical membrane pass occupies residues 1606–1629 (ALFNIGLLLFLVMFIYAIFGMSNF). Residues 1630–1651 (AYVKKEAGIDDMFNFETFGNSM) lie on the Extracellular side of the membrane. An intramembrane region (pore-forming) is located at residues 1652 to 1664 (ICLFQITTSAGWD). The Extracellular segment spans residues 1665–1696 (GLLAPILNSAPPDCDPDAIHPGSSVKGDCGNP). Residues 1697–1722 (SVGIFFFVSYIIISFLVVVNMYIAVI) traverse the membrane as a helical segment. Residues 1723-1947 (LENFSVATEE…PEKESKGKEV (225 aa)) are Cytoplasmic-facing. The IQ domain maps to 1852–1881 (EEVSAAIIQRNYRCYLLKQRLKNISNTYDK). The interval 1901-1947 (LNGNSTPEKTDGSSSTTSPPSYDSVTKPDKEKFEKDKPEKESKGKEV) is disordered. The segment covering 1926-1947 (TKPDKEKFEKDKPEKESKGKEV) has biased composition (basic and acidic residues).

The protein belongs to the sodium channel (TC 1.A.1.10) family. Nav1.3/SCN3A subfamily. Heterooligomer of an alpha subunit, SCN3A, and 1 to 3 regulatory beta subunits including SCN1B and SCN2B; disulfide-linked with some beta subunits like SCN2B. Interacts with NEDD4L; could regulate expression of SCN3A at the plasma membrane through ubiquitination-regulated endocytosis. Post-translationally, may be ubiquitinated by NEDD4L; which would promote its endocytosis. In terms of processing, phosphorylation at Ser-1453 in a highly conserved cytoplasmic loop slows inactivation of the channel and reduces peak sodium currents. In terms of tissue distribution, expressed in enterochromaffin cells in both colon and small bowel (at protein level). Expressed in pancreatic alpha and beta cells.

It localises to the cell membrane. Its subcellular location is the basal cell membrane. The catalysed reaction is Na(+)(in) = Na(+)(out). In terms of biological role, pore-forming subunit of Nav1.3, a voltage-gated sodium (Nav) channel that directly mediates the depolarizing phase of action potentials in excitable membranes. Navs, also called VGSCs (voltage-gated sodium channels) or VDSCs (voltage-dependent sodium channels), operate by switching between closed and open conformations depending on the voltage difference across the membrane. In the open conformation they allow Na(+) ions to selectively pass through the pore, along their electrochemical gradient. The influx of Na+ ions provokes membrane depolarization, initiating the propagation of electrical signals throughout cells and tissues. In some secretory cell types, it also participates in cell excitability through membrane depolarization and regulates cells responsiveness to stimuli triggering secretion. For instance, it controls the release of serotonin/5-hydroxytryptamine by enterochromaffin cells and is required for both glucagon- and glucose-induced insulin secretion in pancreatic endocrine cells. This chain is Sodium channel protein type 3 subunit alpha, found in Mus musculus (Mouse).